A 723-amino-acid chain; its full sequence is Peroxisomal bifunctional enzyme (723 aa).

An enoyl-CoA hydratase / isomerase region spans residues 1–282; it reads MAEYTRLHNA…FAERKANKWS (282 aa). Lys-38 carries the N6-succinyllysine modification. Gly-101 is a binding site for substrate. Position 165 is an N6-acetyllysine; alternate (Lys-165). N6-succinyllysine; alternate is present on Lys-165. Lys-171 is subject to N6-acetyllysine. Lys-219 carries the post-translational modification N6-acetyllysine; alternate. Lys-219 bears the N6-succinyllysine; alternate mark. Lys-250 carries the post-translational modification N6-acetyllysine. Residues Lys-280 and Lys-290 each carry the N6-succinyllysine modification. Positions 283–572 are 3-hydroxyacyl-CoA dehydrogenase; the sequence is TPSGASWKTA…DVLCELGRFG (290 aa). Residues Lys-346, Lys-350, and Lys-464 each carry the N6-acetyllysine modification. Lys-532 carries the post-translational modification N6-succinyllysine. Thr-548 bears the Phosphothreonine mark. Lys-577 carries the post-translational modification N6-succinyllysine. An N6-acetyllysine; alternate mark is found at Lys-584, Lys-591, and Lys-710. N6-succinyllysine; alternate occurs at positions 584, 591, and 710. Phosphoserine is present on Ser-718. The short motif at 721 to 723 is the Microbody targeting signal element; it reads SKL. An N6-succinyllysine modification is found at Lys-722.

The protein in the N-terminal section; belongs to the enoyl-CoA hydratase/isomerase family. In the C-terminal section; belongs to the 3-hydroxyacyl-CoA dehydrogenase family. In terms of assembly, monomer. In terms of processing, acetylated, leading to enhanced enzyme activity. Acetylation is enhanced by up to 80% after treatment either with trichostin A (TSA) or with nicotinamide (NAM) with highest increase on Lys-346. Acetylation and enzyme activity increased by about 1.5% on addition of fatty acids. In terms of tissue distribution, liver and kidney. Strongly expressed in the terminal segments of the proximal tubule. Lower amounts seen in the brain.

The protein resides in the peroxisome. It catalyses the reaction a (3S)-3-hydroxyacyl-CoA = a (2E)-enoyl-CoA + H2O. It carries out the reaction a 4-saturated-(3S)-3-hydroxyacyl-CoA = a (3E)-enoyl-CoA + H2O. The enzyme catalyses a (3Z)-enoyl-CoA = a 4-saturated (2E)-enoyl-CoA. The catalysed reaction is a (3E)-enoyl-CoA = a 4-saturated (2E)-enoyl-CoA. It catalyses the reaction a (3S)-3-hydroxyacyl-CoA + NAD(+) = a 3-oxoacyl-CoA + NADH + H(+). It carries out the reaction (2S,3S)-3-hydroxy-2-methylbutanoyl-CoA = (2E)-2-methylbut-2-enoyl-CoA + H2O. The enzyme catalyses (3S)-hydroxyhexadecanoyl-CoA + NAD(+) = 3-oxohexadecanoyl-CoA + NADH + H(+). The catalysed reaction is (3S)-hydroxyhexadecanoyl-CoA = (2E)-hexadecenoyl-CoA + H2O. It catalyses the reaction (2E)-hexadecenedioyl-CoA + H2O = (3S)-hydroxyhexadecanedioyl-CoA. It carries out the reaction (3S)-hydroxyhexadecanedioyl-CoA + NAD(+) = 3-oxohexadecanedioyl-CoA + NADH + H(+). The enzyme catalyses (3E,5Z)-tetradecadienoyl-CoA = (2E,5Z)-tetradecadienoyl-CoA. The catalysed reaction is (3E,5Z)-octadienoyl-CoA = (2E,5Z)-octadienoyl-CoA. It catalyses the reaction (3S)-hydroxydecanoyl-CoA + NAD(+) = 3-oxodecanoyl-CoA + NADH + H(+). It carries out the reaction (3E)-decenoyl-CoA = (2E)-decenoyl-CoA. The enzyme catalyses (3Z)-hexenoyl-CoA = (2E)-hexenoyl-CoA. The catalysed reaction is (3E)-hexenoyl-CoA = (2E)-hexenoyl-CoA. It catalyses the reaction (3S)-hydroxydecanoyl-CoA = (2E)-decenoyl-CoA + H2O. It carries out the reaction (3S)-hydroxyhexanoyl-CoA = (2E)-hexenoyl-CoA + H2O. Its pathway is lipid metabolism; fatty acid beta-oxidation. Enzyme activity enhanced by acetylation. In terms of biological role, peroxisomal trifunctional enzyme possessing 2-enoyl-CoA hydratase, 3-hydroxyacyl-CoA dehydrogenase, and delta 3, delta 2-enoyl-CoA isomerase activities. Catalyzes two of the four reactions of the long chain fatty acids peroxisomal beta-oxidation pathway. Can also use branched-chain fatty acids such as 2-methyl-2E-butenoyl-CoA as a substrate, which is hydrated into (2S,3S)-3-hydroxy-2-methylbutanoyl-CoA. Optimal isomerase for 2,5 double bonds into 3,5 form isomerization in a range of enoyl-CoA species. Also able to isomerize both 3-cis and 3-trans double bonds into the 2-trans form in a range of enoyl-CoA species. With HSD17B4, catalyzes the hydration of trans-2-enoyl-CoA and the dehydrogenation of 3-hydroxyacyl-CoA, but with opposite chiral specificity. Regulates the amount of medium-chain dicarboxylic fatty acids which are essential regulators of all fatty acid oxidation pathways. Also involved in the degradation of long-chain dicarboxylic acids through peroxisomal beta-oxidation. The polypeptide is Peroxisomal bifunctional enzyme (Homo sapiens (Human)).